The sequence spans 465 residues: ATP-dependent rRNA helicase rrp3 (465 aa).

The interval Met-1–Lys-46 is disordered. Residues Glu-15–Gly-29 show a composition bias toward polar residues. Residues Lys-46 to Ser-74 carry the Q motif motif. The region spanning Ile-77–Val-248 is the Helicase ATP-binding domain. Ala-90–Thr-97 provides a ligand contact to ATP. The DEAD box motif lies at Asp-196–Asp-199. Positions Tyr-275–Met-419 constitute a Helicase C-terminal domain. Positions Met-436–Gly-465 are disordered. The segment covering Ala-445–Arg-455 has biased composition (basic residues).

It belongs to the DEAD box helicase family. DDX47/RRP3 subfamily. In terms of assembly, interacts with the SSU processome.

The protein resides in the nucleus. The enzyme catalyses ATP + H2O = ADP + phosphate + H(+). Functionally, ATP-dependent rRNA helicase required for pre-ribosomal RNA processing. Involved in the maturation of the 35S-pre-rRNA and to its cleavage to mature 18S rRNA. The polypeptide is ATP-dependent rRNA helicase rrp3 (Emericella nidulans (strain FGSC A4 / ATCC 38163 / CBS 112.46 / NRRL 194 / M139) (Aspergillus nidulans)).